The primary structure comprises 100 residues: Integration host factor subunit alpha (100 aa).

A disordered region spans residues 53–73 (FDLRDKRQRPGRNPKTGEEIP).

It belongs to the bacterial histone-like protein family. Heterodimer of an alpha and a beta chain.

Functionally, this protein is one of the two subunits of integration host factor, a specific DNA-binding protein that functions in genetic recombination as well as in transcriptional and translational control. This is Integration host factor subunit alpha from Pseudomonas aeruginosa (strain LESB58).